Here is a 334-residue protein sequence, read N- to C-terminus: Cytoskeleton protein RodZ (334 aa).

At 1–111 (MNTEATHDQN…LGKRRKKRDG (111 aa)) the chain is on the cytoplasmic side. The 53-residue stretch at 19–71 (LRNAREQLGLSQQAVAERLCLKVSTVRDIEEDKAPSDLASTFLRGYIRSYARL) folds into the HTH cro/C1-type domain. Positions 30-49 (QQAVAERLCLKVSTVRDIEE) form a DNA-binding region, H-T-H motif. The helical; Signal-anchor for type II membrane protein transmembrane segment at 112–132 (WLMSFTWLVLFVVVGLTGAWW) threads the bilayer. Topologically, residues 133 to 334 (WQNHKAQQEE…TLNAEPTPAQ (202 aa)) are periplasmic. A disordered region spans residues 155–241 (NADKDSGQSV…PSALPTSQAG (87 aa)). Low complexity-rich tracts occupy residues 170 to 211 (AATS…TVVA) and 219 to 241 (TAAT…SQAG).

Belongs to the RodZ family.

The protein localises to the cell inner membrane. Functionally, cytoskeletal protein that is involved in cell-shape control through regulation of the length of the long axis. In Salmonella agona (strain SL483), this protein is Cytoskeleton protein RodZ.